We begin with the raw amino-acid sequence, 106 residues long: Diptericin A (106 aa).

Positions M1–A19 are cleaved as a signal peptide. The propeptide at Y20–P23 is removed by a dipeptidylpeptidase.

This sequence belongs to the attacin/sarcotoxin-2 family.

The protein localises to the secreted. In terms of biological role, antimicrobial peptide required to resist Gram-negative bacterial infections, regulated by Dredd. The chain is Diptericin A from Drosophila melanogaster (Fruit fly).